The following is a 203-amino-acid chain: VPS4-associated protein 1 (203 aa).

Positions 99–109 are enriched in basic and acidic residues; sequence EKETNNSKDPD. Disordered stretches follow at residues 99 to 125 and 171 to 193; these read EKET…AKND and QVNR…EELL. Over residues 110 to 120 the composition is skewed to low complexity; it reads PTTTDSTDTSP. A coiled-coil region spans residues 121–157; that stretch reads QAKNDAEILSETKKQYSKILDKVTELQRKNRKYELAK. A compositionally biased stretch (basic and acidic residues) spans 171 to 182; that stretch reads QVNRERYLKEQE.

In terms of assembly, interacts with VPS4.

The protein resides in the cytoplasm. It is found in the endosome. Functionally, VPS4-associated protein involved in trafficking to the vacuole. The protein is VPS4-associated protein 1 (VFA1) of Saccharomyces cerevisiae (strain ATCC 204508 / S288c) (Baker's yeast).